A 343-amino-acid polypeptide reads, in one-letter code: Cell invasion protein SipD (343 aa).

The disordered stretch occupies residues 1 to 26 (MLNIQNYSASPHPGIVAERPQTPSAS). Residues 295 to 322 (KAQEENMKTTLQTLTQKYSNANSLYDNL) adopt a coiled-coil conformation.

This sequence belongs to the invasin protein D family.

The protein resides in the secreted. Its function is as follows. Required for translocation of effector proteins via the type III secretion system SPI-1, which is essential for an efficient bacterial internalization. Probably acts by modulating the secretion of SipA, SipB, and SipC. This chain is Cell invasion protein SipD (sipD), found in Salmonella typhimurium (strain LT2 / SGSC1412 / ATCC 700720).